The chain runs to 431 residues: Enolase (431 aa).

Glutamine 162 contacts (2R)-2-phosphoglycerate. The Proton donor role is filled by glutamate 204. Mg(2+)-binding residues include aspartate 241, glutamate 284, and aspartate 311. Positions 336, 365, 366, and 387 each coordinate (2R)-2-phosphoglycerate. Catalysis depends on lysine 336, which acts as the Proton acceptor.

The protein belongs to the enolase family. The cofactor is Mg(2+).

Its subcellular location is the cytoplasm. The protein localises to the secreted. It localises to the cell surface. The enzyme catalyses (2R)-2-phosphoglycerate = phosphoenolpyruvate + H2O. It functions in the pathway carbohydrate degradation; glycolysis; pyruvate from D-glyceraldehyde 3-phosphate: step 4/5. Functionally, catalyzes the reversible conversion of 2-phosphoglycerate (2-PG) into phosphoenolpyruvate (PEP). It is essential for the degradation of carbohydrates via glycolysis. This Sorangium cellulosum (strain So ce56) (Polyangium cellulosum (strain So ce56)) protein is Enolase.